A 1322-amino-acid chain; its full sequence is Structural polyprotein (1322 aa).

Disordered stretches follow at residues 18 to 41 (FAPA…EPQV) and 61 to 128 (AGLA…RISV). The segment at 48-81 (ALANQMSALQLQVAGLAGQARVDRRGPRRVQKNK) is host transcription inhibition. The span at 73 to 86 (GPRRVQKNKQKKKN) shows a compositional bias: basic residues. A Nuclear localization signal motif is present at residues 74 to 120 (PRRVQKNKQKKKNSSNGEKPKEKKKKQKQQEKKGSGGEKAKKPRNRP). Basic and acidic residues predominate over residues 101–113 (KQQEKKGSGGEKA). Residues 101-135 (KQQEKKGSGGEKAKKPRNRPGKEVRISVKRARQST) form a binding to the viral RNA region. The ribosome-binding stretch occupies residues 120-134 (PGKEVRISVKRARQS). A Peptidase S3 domain is found at 134 to 283 (STFPVYHDGA…EIAYSEAIPW (150 aa)). Histidine 160 serves as the catalytic Charge relay system. A Nuclear export signal motif is present at residues 165–175 (FDHPELADIKF). Aspartate 182 acts as the Charge relay system in catalysis. Residues 203–213 (MDGVYNGEYGN) are dimerization of the capsid protein. The active-site Charge relay system is the serine 234. A dimerization of the capsid protein region spans residues 240-244 (DNSGK). The functions as an uncleaved signal peptide for the precursor of protein E3/E2 stretch occupies residues 284 to 303 (TRAPALLLLPMVIACTYNSN). Disulfide bonds link cysteine 298/cysteine 307, cysteine 382/cysteine 488, cysteine 385/cysteine 390, cysteine 455/cysteine 469, and cysteine 517/cysteine 634. Topologically, residues 355–735 (AVSTSPVAVY…VHHIKHHPEY (381 aa)) are extracellular. A helical transmembrane segment spans residues 736–756 (AWAFVGVACGLLAVAACMFAC). At 757-792 (ACNRVRYSLLANTFNPNPPPLTALTAALCCIPGARA) the chain is on the cytoplasmic side. Residues 761-785 (VRYSLLANTFNPNPPPLTALTAALC) are transient transmembrane before p62-6K protein processing. Residues cysteine 785 and cysteine 786 are each lipidated (S-palmitoyl cysteine; by host). At 793–808 (DQPYLDIIAYLWTNSK) the chain is on the extracellular side. Residues 809 to 829 (VAFGLQCAAPVACMLIVTYAL) form a helical membrane-spanning segment. Residues 830–834 (RHCRL) lie on the Cytoplasmic side of the membrane. A helical transmembrane segment spans residues 835-855 (CCNSFLGVRGWSALLVILAYV). Topologically, residues 856–1287 (QSCKAYEHTV…YISGPAMRWA (432 aa)) are extracellular. Cystine bridges form between cysteine 910–cysteine 985, cysteine 923–cysteine 965, cysteine 924–cysteine 967, cysteine 929–cysteine 949, cysteine 1135–cysteine 1147, cysteine 1177–cysteine 1253, cysteine 1182–cysteine 1257, and cysteine 1204–cysteine 1247. The E1 fusion peptide loop stretch occupies residues 955–972 (VYPLLWGAAHCFCSTENT). Residues 1288–1309 (GRIVGNPSGPVSSSLAVTYCVV) form a helical membrane-spanning segment. The Cytoplasmic segment spans residues 1310-1322 (KKCRSKRIRIVKS). Residue cysteine 1312 is the site of S-stearoyl cysteine; by host attachment.

Homodimer. Homomultimer. Interacts with host karyopherin KPNA4; this interaction allows the nuclear import of the viral capsid protein. Interacts with spike glycoprotein E2. Interacts with host IRAK1; the interaction leads to inhibition of IRAK1-dependent signaling. In terms of assembly, the precursor of protein E3/E2 and E1 form a heterodimer shortly after synthesis. As to quaternary structure, interacts with spike glycoprotein E2. The precursor of protein E3/E2 and E1 form a heterodimer shortly after synthesis. Processing of the precursor of protein E3/E2 into E2 and E3 results in a heterodimer of the spike glycoproteins E2 and E1. Spike at virion surface are constituted of three E2-E1 heterodimers. After target cell attachment and endocytosis, E1 change conformation to form homotrimers. Interacts with 6K protein. Interacts with spike glycoprotein E1. Processing of the precursor of protein E3/E2 into E2 and E3 results in a heterodimer of the spike glycoproteins E2 and E1. Spike at virion surface are constituted of a trimer of E2-E1 heterodimers. Interacts with 6K protein. In terms of assembly, oligomer. Interacts with spike glycoprotein E1. Interacts with spike glycoprotein E2. In terms of processing, structural polyprotein: Specific enzymatic cleavages in vivo yield mature proteins. Capsid protein is auto-cleaved during polyprotein translation, unmasking a signal peptide at the N-terminus of the precursor of E3/E2. The remaining polyprotein is then targeted to the host endoplasmic reticulum, where host signal peptidase cleaves it into pE2, 6K and E1 proteins. pE2 is further processed to mature E3 and E2 by host furin in trans-Golgi vesicle. Palmitoylated via thioester bonds. These palmitoylations may induce disruption of the C-terminus transmembrane. This would result in the reorientation of E2 C-terminus from lumenal to cytoplasmic side. Post-translationally, N-glycosylated. In terms of processing, palmitoylated via thioester bonds.

It is found in the virion. The protein resides in the host cytoplasm. It localises to the host cell membrane. The protein localises to the host nucleus. Its subcellular location is the virion membrane. It is found in the host Golgi apparatus. The protein resides in the host trans-Golgi network. It localises to the host endoplasmic reticulum. The enzyme catalyses Autocatalytic release of the core protein from the N-terminus of the togavirus structural polyprotein by hydrolysis of a -Trp-|-Ser- bond.. In terms of biological role, forms an icosahedral capsid with a T=4 symmetry composed of 240 copies of the capsid protein surrounded by a lipid membrane through which penetrate 80 spikes composed of trimers of E1-E2 heterodimers. The capsid protein binds to the viral RNA genome at a site adjacent to a ribosome binding site for viral genome translation following genome release. Possesses a protease activity that results in its autocatalytic cleavage from the nascent structural protein. Following its self-cleavage, the capsid protein transiently associates with ribosomes, and within several minutes the protein binds to viral RNA and rapidly assembles into icosahedric core particles. The resulting nucleocapsid eventually associates with the cytoplasmic domain of the spike glycoprotein E2 at the cell membrane, leading to budding and formation of mature virions. In case of infection, new virions attach to target cells and after clathrin-mediated endocytosis their membrane fuses with the host endosomal membrane. This leads to the release of the nucleocapsid into the cytoplasm, followed by an uncoating event necessary for the genomic RNA to become accessible. The uncoating might be triggered by the interaction of capsid proteins with ribosomes. Binding of ribosomes would release the genomic RNA since the same region is genomic RNA-binding and ribosome-binding. Specifically inhibits interleukin-1 receptor-associated kinase 1/IRAK1-dependent signaling during viral entry, representing a means by which the alphaviruses may evade innate immune detection and activation prior to viral gene expression. Provides the signal sequence for the translocation of the precursor of protein E3/E2 to the host endoplasmic reticulum. Furin-cleaved E3 remains associated with spike glycoprotein E1 and mediates pH protection of the latter during the transport via the secretory pathway. After virion release from the host cell, the assembly protein E3 is gradually released in the extracellular space. Functionally, plays a role in viral attachment to target host cell, by binding to the cell receptor. Synthesized as a p62 precursor which is processed by furin at the cell membrane just before virion budding, giving rise to E2-E1 heterodimer. The p62-E1 heterodimer is stable, whereas E2-E1 is unstable and dissociate at low pH. p62 is processed at the last step, presumably to avoid E1 fusion activation before its final export to cell surface. E2 C-terminus contains a transitory transmembrane that would be disrupted by palmitoylation, resulting in reorientation of the C-terminal tail from lumenal to cytoplasmic side. This step is critical since E2 C-terminus is involved in budding by interacting with capsid proteins. This release of E2 C-terminus in cytoplasm occurs lately in protein export, and precludes premature assembly of particles at the endoplasmic reticulum membrane. Its function is as follows. Acts as a viroporin that participates in virus glycoprotein processing and transport to the plasma membrane, cell permeabilization and budding of viral particles. Disrupts the calcium homeostasis of the cell, probably at the endoplasmic reticulum level. This leads to cytoplasmic calcium elevation. Because of its lipophilic properties, the 6K protein is postulated to influence the selection of lipids that interact with the transmembrane domains of the glycoproteins, which, in turn, affects the deformability of the bilayer required for the extreme curvature that occurs as budding proceeds. Present in low amount in virions, about 3% compared to viral glycoproteins. In terms of biological role, class II viral fusion protein. Fusion activity is inactive as long as E1 is bound to E2 in mature virion. After virus attachment to target cell and endocytosis, acidification of the endosome induce dissociation of E1/E2 heterodimer and concomitant trimerization of the E1 subunits. This E1 trimer is fusion active, and promotes release of viral nucleocapsid in cytoplasm after endosome and viral membrane fusion. Efficient fusion requires the presence of cholesterol and sphingolipid in the target membrane. This chain is Structural polyprotein, found in Oncorhynchus mykiss (Rainbow trout).